Here is a 427-residue protein sequence, read N- to C-terminus: Acetylornithine aminotransferase (427 aa).

The segment at 1–23 (MSLQTLIEQATNPPESGSAASSP) is disordered. Pyridoxal 5'-phosphate contacts are provided by residues 124-125 (GA) and F157. Residue R160 coordinates N(2)-acetyl-L-ornithine. 248-251 (DEVQ) is a binding site for pyridoxal 5'-phosphate. Residue K277 is modified to N6-(pyridoxal phosphate)lysine. Position 304 (S304) interacts with N(2)-acetyl-L-ornithine. Residue T305 coordinates pyridoxal 5'-phosphate.

This sequence belongs to the class-III pyridoxal-phosphate-dependent aminotransferase family. ArgD subfamily. Homodimer. Pyridoxal 5'-phosphate is required as a cofactor.

The protein resides in the cytoplasm. It catalyses the reaction N(2)-acetyl-L-ornithine + 2-oxoglutarate = N-acetyl-L-glutamate 5-semialdehyde + L-glutamate. It participates in amino-acid biosynthesis; L-arginine biosynthesis; N(2)-acetyl-L-ornithine from L-glutamate: step 4/4. The polypeptide is Acetylornithine aminotransferase (Nostoc sp. (strain PCC 7120 / SAG 25.82 / UTEX 2576)).